Reading from the N-terminus, the 671-residue chain is MESIEQQLTELRTTLRHHEYLYHVMDAPEIPDAEYDRLMRELRELETKHPELITPDSPTQRVGAAPLAAFSQIRHEVPMLSLDNVFDEESFLAFNKRVQDRLKSNEKVTWCCELKLDGLAVSILYENGVLVSAATRGDGTTGEDITSNVRTIRAIPLKLHGENIPARLEVRGEVFLPQAGFEKINEDARRTGGKVFANPRNAAAGSLRQLDPRITAKRPLTFFCYGVGVLEGGELPDTHLGRLLQFKKWGLPVSDRVTLCESAEEVLAFYHKVEEDRPTLGFDIDGVVIKINSLAQQEQLGFVARAPRWAVAFKFPAQEQMTFVRDVEFQVGRTGAITPVARLEPVHVAGVLVSNATLHNADEIERLGLRIGDKVVIRRAGDVIPQVVNVVLSERPEDTREVVFPTHCPVCGSDVERVEGEAVARCTGGLICGAQRKESLKHFVSRRAMDVDGMGDKIIDQLVEKEYVHTPADLFKLTAGKLTGLERMGPKSAQNVVNALEKAKETTFARFLYALGIREVGEATAAGLAAYFGTLEALEAASIEELQKVPDVGIVVASHVHNFFAEESNRNVISELLAEGVHWPAPVVINAEEIDSPFAGKTVVLTGSLSQMSRDDAKARLVELGAKVAGSVSKKTDLVIAGEAAGSKLAKAQELGIEVIDEAEMLRLLGS.

NAD(+)-binding positions include 32–36 (DAEYD), 81–82 (SL), and Glu113. The active-site N6-AMP-lysine intermediate is the Lys115. Arg136, Glu173, Lys290, and Lys314 together coordinate NAD(+). Residues Cys408, Cys411, Cys426, and Cys432 each contribute to the Zn(2+) site. The BRCT domain maps to 593–671 (EIDSPFAGKT…EAEMLRLLGS (79 aa)).

Belongs to the NAD-dependent DNA ligase family. LigA subfamily. Mg(2+) serves as cofactor. It depends on Mn(2+) as a cofactor.

It carries out the reaction NAD(+) + (deoxyribonucleotide)n-3'-hydroxyl + 5'-phospho-(deoxyribonucleotide)m = (deoxyribonucleotide)n+m + AMP + beta-nicotinamide D-nucleotide.. DNA ligase that catalyzes the formation of phosphodiester linkages between 5'-phosphoryl and 3'-hydroxyl groups in double-stranded DNA using NAD as a coenzyme and as the energy source for the reaction. It is essential for DNA replication and repair of damaged DNA. In Escherichia coli O7:K1 (strain IAI39 / ExPEC), this protein is DNA ligase.